The primary structure comprises 60 residues: Cytotoxin SP15c (60 aa).

Disulfide bonds link Cys3-Cys21, Cys14-Cys38, Cys42-Cys53, and Cys54-Cys59.

Belongs to the three-finger toxin family. Short-chain subfamily. Type IA cytotoxin sub-subfamily. In terms of assembly, monomer in solution; Homodimer and oligomer in the presence of negatively charged lipids forming a pore with a size ranging between 20 and 30 Angstroms. As to expression, expressed by the venom gland.

The protein localises to the secreted. It localises to the target cell membrane. Its function is as follows. Shows cytolytic activity on many different cells by forming pore in lipid membranes. In vivo, increases heart rate or kills the animal by cardiac arrest. In addition, it binds to heparin with high affinity, interacts with Kv channel-interacting protein 1 (KCNIP1) in a calcium-independent manner, and binds to integrin alpha-V/beta-3 (ITGAV/ITGB3) with moderate affinity. This is Cytotoxin SP15c from Naja atra (Chinese cobra).